Consider the following 30-residue polypeptide: Trypsin inhibitor 1 (30 aa).

3 disulfides stabilise this stretch: Cys4-Cys21, Cys11-Cys23, and Cys17-Cys29.

This sequence belongs to the protease inhibitor I7 (squash-type serine protease inhibitor) family.

The protein localises to the secreted. Inhibits trypsin. This is Trypsin inhibitor 1 from Momordica charantia (Bitter gourd).